Reading from the N-terminus, the 892-residue chain is Transposase for transposon Tn4556 (892 aa).

The span at 1 to 12 (MGGRAGLDDGRG) shows a compositional bias: basic and acidic residues. The disordered stretch occupies residues 1 to 63 (MGGRAGLDDG…GQPARDAEHR (63 aa)). Residues 23–34 (VAEGAAGAAAWG) are compositionally biased toward low complexity.

The protein belongs to the transposase 7 family.

In terms of biological role, required for transposition of transposon Tn4556. The polypeptide is Transposase for transposon Tn4556 (tnpA) (Streptomyces fradiae (Streptomyces roseoflavus)).